Reading from the N-terminus, the 156-residue chain is Small ribosomal subunit protein uS7c (156 aa).

This sequence belongs to the universal ribosomal protein uS7 family. As to quaternary structure, part of the 30S ribosomal subunit.

It localises to the plastid. Its subcellular location is the chloroplast. One of the primary rRNA binding proteins, it binds directly to 16S rRNA where it nucleates assembly of the head domain of the 30S subunit. This Phaeodactylum tricornutum (strain CCAP 1055/1) protein is Small ribosomal subunit protein uS7c (rps7).